A 100-amino-acid chain; its full sequence is Large ribosomal subunit protein uL23 (100 aa).

The protein belongs to the universal ribosomal protein uL23 family. In terms of assembly, part of the 50S ribosomal subunit. Contacts protein L29, and trigger factor when it is bound to the ribosome.

Its function is as follows. One of the early assembly proteins it binds 23S rRNA. One of the proteins that surrounds the polypeptide exit tunnel on the outside of the ribosome. Forms the main docking site for trigger factor binding to the ribosome. The polypeptide is Large ribosomal subunit protein uL23 (Kosmotoga olearia (strain ATCC BAA-1733 / DSM 21960 / TBF 19.5.1)).